The primary structure comprises 348 residues: CCN family member 2 (348 aa).

Residues 1-25 (MLASVAGPISLALVLLALCTRPAMG) form the signal peptide. The region spanning 26–97 (QDCSAQCQCA…NRKIGVCTAK (72 aa)) is the IGFBP N-terminal domain. 6 disulfide bridges follow: Cys28–Cys53, Cys32–Cys55, Cys34–Cys56, Cys42–Cys59, Cys67–Cys81, and Cys73–Cys94. The VWFC domain occupies 100–166 (APCVFGGSVY…GKCCEEWVCD (67 aa)). Residues 197–242 (NCLVQTTEWSACSKTCGMGISTRVTNDNTFCRLEKQSRLCMVRPCE) form the TSP type-1 domain. The tract at residues 246-348 (EENIKKGKKC…YYRKMYGDMA (103 aa)) is heparin-binding. 5 disulfides stabilise this stretch: Cys255-Cys292, Cys272-Cys306, Cys283-Cys322, Cys286-Cys324, and Cys291-Cys328. Positions 255–329 (CIRTPKIAKP…KTCACHYNCP (75 aa)) constitute a CTCK domain.

It belongs to the CCN family. In terms of assembly, monomer. Interacts with TSKU. In terms of tissue distribution, testis, spleen, kidney, lung, heart, and brain (lowest level in testis and highest in lung).

The protein resides in the secreted. The protein localises to the extracellular space. It localises to the extracellular matrix. Its function is as follows. Major connective tissue mitoattractant secreted by vascular endothelial cells. Promotes proliferation and differentiation of chondrocytes. Is involved in the stimulation of osteoblast differentiation and has a critical role in osteogenesis. Mediates heparin- and divalent cation-dependent cell adhesion in many cell types including fibroblasts, myofibroblasts, endothelial and epithelial cells. Enhances fibroblast growth factor-induced DNA synthesis. This chain is CCN family member 2, found in Mus musculus (Mouse).